The primary structure comprises 177 residues: Secretion monitor (177 aa).

The first 37 residues, 1–37 (MIGILNRWRQFGRRYFWPHLLLGMVAASLGVPLNLSG), serve as a signal peptide directing secretion.

This sequence belongs to the SecM family.

It localises to the cytoplasm. The protein localises to the cytosol. It is found in the periplasm. Its function is as follows. Regulates secA expression by translational coupling of the secM secA operon. Translational pausing at a specific Pro residue 5 residues before the end of the protein may allow disruption of a mRNA repressor helix that normally suppresses secA translation initiation. In Yersinia pestis bv. Antiqua (strain Antiqua), this protein is Secretion monitor.